The chain runs to 157 residues: Ribonuclease H (157 aa).

In terms of domain architecture, RNase H type-1 spans 3 to 144 (ELKQLYIFTD…CDVLARKAAE (142 aa)). Residues Asp-12, Glu-50, Asp-72, and Asp-136 each contribute to the Mg(2+) site.

Belongs to the RNase H family. As to quaternary structure, monomer. Mg(2+) serves as cofactor.

It is found in the cytoplasm. It carries out the reaction Endonucleolytic cleavage to 5'-phosphomonoester.. Endonuclease that specifically degrades the RNA of RNA-DNA hybrids. The chain is Ribonuclease H from Shewanella frigidimarina (strain NCIMB 400).